A 315-amino-acid chain; its full sequence is Diacylglycerol kinase (315 aa).

In terms of domain architecture, DAGKc spans 1–132 (MRKRARIIYN…VDIGKMNNRY (132 aa)). Residues 10-14 (NPTSG), Thr41, 67-73 (GDGTLNE), and Thr94 contribute to the ATP site. The Mg(2+) site is built by Lys213, Asp216, and Tyr218. Glu273 serves as the catalytic Proton acceptor.

Belongs to the diacylglycerol/lipid kinase family. As to quaternary structure, homodimer. Mg(2+) is required as a cofactor.

It carries out the reaction a 1,2-diacyl-sn-glycerol + ATP = a 1,2-diacyl-sn-glycero-3-phosphate + ADP + H(+). Catalyzes the phosphorylation of diacylglycerol (DAG) into phosphatidic acid. Is a key enzyme involved in the production of lipoteichoic acid by reintroducing DAG formed from the breakdown of membrane phospholipids into the phosphatidylglycerol biosynthetic pathway. This chain is Diacylglycerol kinase (dagK), found in Staphylococcus aureus (strain MRSA252).